The primary structure comprises 382 residues: 8-amino-7-oxononanoate synthase (382 aa).

Arginine 26 is a binding site for substrate. 104-105 (GY) contacts pyridoxal 5'-phosphate. Histidine 129 contacts substrate. Pyridoxal 5'-phosphate-binding positions include serine 175, 200 to 203 (DEAH), and 232 to 235 (TLSK). The residue at position 235 (lysine 235) is an N6-(pyridoxal phosphate)lysine. Threonine 345 lines the substrate pocket.

It belongs to the class-II pyridoxal-phosphate-dependent aminotransferase family. BioF subfamily. As to quaternary structure, homodimer. Pyridoxal 5'-phosphate serves as cofactor.

It carries out the reaction 6-carboxyhexanoyl-[ACP] + L-alanine + H(+) = (8S)-8-amino-7-oxononanoate + holo-[ACP] + CO2. It participates in cofactor biosynthesis; biotin biosynthesis. In terms of biological role, catalyzes the decarboxylative condensation of pimeloyl-[acyl-carrier protein] and L-alanine to produce 8-amino-7-oxononanoate (AON), [acyl-carrier protein], and carbon dioxide. The protein is 8-amino-7-oxononanoate synthase of Mycobacterium sp. (strain JLS).